The following is a 491-amino-acid chain: Arginine decarboxylase (491 aa).

An N6-(pyridoxal phosphate)lysine modification is found at Lys-227.

This sequence belongs to the Orn/Lys/Arg decarboxylase class-I family. It depends on pyridoxal 5'-phosphate as a cofactor.

It localises to the cytoplasm. The catalysed reaction is L-arginine + H(+) = agmatine + CO2. The protein operates within amine and polyamine biosynthesis; agmatine biosynthesis; agmatine from L-arginine: step 1/1. In terms of biological role, catalyzes the formation of agmatine from arginine. The polypeptide is Arginine decarboxylase (speA) (Halalkalibacterium halodurans (strain ATCC BAA-125 / DSM 18197 / FERM 7344 / JCM 9153 / C-125) (Bacillus halodurans)).